The following is a 319-amino-acid chain: Probable metallo-hydrolase YqjP (319 aa).

The Zn(2+) site is built by His-67, His-69, Asp-71, His-72, His-165, Asp-184, and His-231.

It belongs to the metallo-beta-lactamase superfamily. Zn(2+) is required as a cofactor.

The sequence is that of Probable metallo-hydrolase YqjP (yqjP) from Bacillus subtilis (strain 168).